Reading from the N-terminus, the 149-residue chain is Calmodulin (149 aa).

An N-acetylalanine modification is found at Ala-2. 4 EF-hand domains span residues Glu-8–Asn-43, Pro-44–Asp-79, Asp-81–Lys-116, and Leu-117–Lys-149. Ca(2+) contacts are provided by Asp-21, Asp-23, Asp-25, Thr-27, Glu-32, Asp-59, Asn-61, Thr-63, Glu-68, Asp-94, Asp-96, Asn-98, Tyr-100, and Glu-105. Lys-116 bears the N6,N6,N6-trimethyllysine mark. Ca(2+) contacts are provided by Asp-130, Asp-132, Asp-134, Gln-136, and Glu-141.

Belongs to the calmodulin family.

Functionally, calmodulin acts as part of a calcium signal transduction pathway by mediating the control of a large number of enzymes, ion channels, aquaporins and other proteins through calcium-binding. Calcium-binding is required for the activation of calmodulin. Among the enzymes to be stimulated by the calmodulin-calcium complex are a number of protein kinases, such as myosin light-chain kinases and calmodulin-dependent protein kinase type II (CaMK2), and phosphatases. This chain is Calmodulin, found in Myxine glutinosa (Atlantic hagfish).